Consider the following 187-residue polypeptide: Orotate phosphoribosyltransferase (187 aa).

Residues R103, K104, K107, and 129–137 (EDVTTSGGS) contribute to the 5-phospho-alpha-D-ribose 1-diphosphate site. 2 residues coordinate orotate: T133 and R161.

This sequence belongs to the purine/pyrimidine phosphoribosyltransferase family. PyrE subfamily. Homodimer. Mg(2+) is required as a cofactor.

The catalysed reaction is orotidine 5'-phosphate + diphosphate = orotate + 5-phospho-alpha-D-ribose 1-diphosphate. It participates in pyrimidine metabolism; UMP biosynthesis via de novo pathway; UMP from orotate: step 1/2. Its function is as follows. Catalyzes the transfer of a ribosyl phosphate group from 5-phosphoribose 1-diphosphate to orotate, leading to the formation of orotidine monophosphate (OMP). This Methanosarcina acetivorans (strain ATCC 35395 / DSM 2834 / JCM 12185 / C2A) protein is Orotate phosphoribosyltransferase.